The following is a 336-amino-acid chain: Glycerol-3-phosphate dehydrogenase [NAD(P)+] (336 aa).

Residues Ser11, Trp12, Arg32, and Lys109 each coordinate NADPH. Positions 109, 140, and 142 each coordinate sn-glycerol 3-phosphate. An NADPH-binding site is contributed by Ala144. Lys195, Asp248, Ser258, Arg259, and Asn260 together coordinate sn-glycerol 3-phosphate. Residue Lys195 is the Proton acceptor of the active site. Residue Arg259 participates in NADPH binding. NADPH is bound by residues Val283 and Glu285.

Belongs to the NAD-dependent glycerol-3-phosphate dehydrogenase family.

It localises to the cytoplasm. It carries out the reaction sn-glycerol 3-phosphate + NAD(+) = dihydroxyacetone phosphate + NADH + H(+). The enzyme catalyses sn-glycerol 3-phosphate + NADP(+) = dihydroxyacetone phosphate + NADPH + H(+). It functions in the pathway membrane lipid metabolism; glycerophospholipid metabolism. Catalyzes the reduction of the glycolytic intermediate dihydroxyacetone phosphate (DHAP) to sn-glycerol 3-phosphate (G3P), the key precursor for phospholipid synthesis. This is Glycerol-3-phosphate dehydrogenase [NAD(P)+] from Leuconostoc mesenteroides subsp. mesenteroides (strain ATCC 8293 / DSM 20343 / BCRC 11652 / CCM 1803 / JCM 6124 / NCDO 523 / NBRC 100496 / NCIMB 8023 / NCTC 12954 / NRRL B-1118 / 37Y).